Reading from the N-terminus, the 475-residue chain is ATP synthase subunit beta (475 aa).

Residue 155–162 participates in ATP binding; it reads GGAGVGKT.

It belongs to the ATPase alpha/beta chains family. As to quaternary structure, F-type ATPases have 2 components, CF(1) - the catalytic core - and CF(0) - the membrane proton channel. CF(1) has five subunits: alpha(3), beta(3), gamma(1), delta(1), epsilon(1). CF(0) has three main subunits: a(1), b(2) and c(9-12). The alpha and beta chains form an alternating ring which encloses part of the gamma chain. CF(1) is attached to CF(0) by a central stalk formed by the gamma and epsilon chains, while a peripheral stalk is formed by the delta and b chains.

The protein resides in the cell inner membrane. The catalysed reaction is ATP + H2O + 4 H(+)(in) = ADP + phosphate + 5 H(+)(out). Its function is as follows. Produces ATP from ADP in the presence of a proton gradient across the membrane. The catalytic sites are hosted primarily by the beta subunits. The polypeptide is ATP synthase subunit beta (Rhizobium etli (strain CIAT 652)).